We begin with the raw amino-acid sequence, 593 residues long: Chromosomal replication initiator protein DnaA (593 aa).

Residues 1–71 (MSDPCWEQCV…EIISNSDAGP (71 aa)) are domain I, interacts with DnaA modulators. The interval 71-256 (PKSLEIAVAQ…DVEGGIQHKH (186 aa)) is domain II. Positions 97-186 (AVPVPDPLPS…STESSADRER (90 aa)) are disordered. The segment covering 113-124 (SFQPPKGNTSAD) has biased composition (polar residues). The segment at 257–473 (NLNTTFIFDN…GALKRVIANA (217 aa)) is domain III, AAA+ region. Positions 301, 303, 304, and 305 each coordinate ATP. The domain IV, binds dsDNA stretch occupies residues 474–593 (QFTQRSISVE…VKNLLRTLTT (120 aa)).

It belongs to the DnaA family. Oligomerizes as a right-handed, spiral filament on DNA at oriC.

The protein resides in the cytoplasm. Functionally, plays an essential role in the initiation and regulation of chromosomal replication. ATP-DnaA binds to the origin of replication (oriC) to initiate formation of the DNA replication initiation complex once per cell cycle. Binds the DnaA box (a 9 base pair repeat at the origin) and separates the double-stranded (ds)DNA. Forms a right-handed helical filament on oriC DNA; dsDNA binds to the exterior of the filament while single-stranded (ss)DNA is stabiized in the filament's interior. The ATP-DnaA-oriC complex binds and stabilizes one strand of the AT-rich DNA unwinding element (DUE), permitting loading of DNA polymerase. After initiation quickly degrades to an ADP-DnaA complex that is not apt for DNA replication. Binds acidic phospholipids. The polypeptide is Chromosomal replication initiator protein DnaA (Teredinibacter turnerae (strain ATCC 39867 / T7901)).